The primary structure comprises 154 residues: UPF0756 membrane protein BLi03063/BL00400 (154 aa).

The next 4 membrane-spanning stretches (helical) occupy residues 8-28 (FLIL…IIAV), 54-74 (WGVT…EIGF), 87-107 (WIAL…ITLL), and 117-137 (LVFG…GPLI).

It belongs to the UPF0756 family.

Its subcellular location is the cell membrane. This chain is UPF0756 membrane protein BLi03063/BL00400, found in Bacillus licheniformis (strain ATCC 14580 / DSM 13 / JCM 2505 / CCUG 7422 / NBRC 12200 / NCIMB 9375 / NCTC 10341 / NRRL NRS-1264 / Gibson 46).